Consider the following 475-residue polypeptide: Putative aldehyde dehydrogenase (475 aa).

NAD(+) contacts are provided by residues 146 to 147 and 223 to 224; these read WN and GS. The Proton acceptor role is filled by Glu-245. Leu-246 contributes to the NAD(+) binding site. Cys-279 acts as the Nucleophile in catalysis. Glu-379 contributes to the NAD(+) binding site.

It belongs to the aldehyde dehydrogenase family.

It carries out the reaction an aldehyde + NAD(+) + H2O = a carboxylate + NADH + 2 H(+). This is Putative aldehyde dehydrogenase from Staphylococcus aureus (strain MSSA476).